Here is a 264-residue protein sequence, read N- to C-terminus: Thymidylate synthase (264 aa).

A dUMP-binding site is contributed by R21. Residue H51 participates in (6R)-5,10-methylene-5,6,7,8-tetrahydrofolate binding. 126–127 is a dUMP binding site; that stretch reads RR. The active-site Nucleophile is C146. DUMP contacts are provided by residues 166–169, N177, and 207–209; these read RSAD and HIY. D169 is a (6R)-5,10-methylene-5,6,7,8-tetrahydrofolate binding site. A263 is a binding site for (6R)-5,10-methylene-5,6,7,8-tetrahydrofolate.

It belongs to the thymidylate synthase family. Bacterial-type ThyA subfamily. Homodimer.

The protein localises to the cytoplasm. The enzyme catalyses dUMP + (6R)-5,10-methylene-5,6,7,8-tetrahydrofolate = 7,8-dihydrofolate + dTMP. Its pathway is pyrimidine metabolism; dTTP biosynthesis. Its function is as follows. Catalyzes the reductive methylation of 2'-deoxyuridine-5'-monophosphate (dUMP) to 2'-deoxythymidine-5'-monophosphate (dTMP) while utilizing 5,10-methylenetetrahydrofolate (mTHF) as the methyl donor and reductant in the reaction, yielding dihydrofolate (DHF) as a by-product. This enzymatic reaction provides an intracellular de novo source of dTMP, an essential precursor for DNA biosynthesis. This is Thymidylate synthase from Coxiella burnetii (strain Dugway 5J108-111).